The primary structure comprises 333 residues: Cinnamoyl-CoA reductase 1 (333 aa).

Residues 13–19 (GAGGFIA), Arg-38, Lys-44, 64–65 (DL), 84–86 (TAS), Tyr-157, Lys-161, 184–187 (PVLV), and Ser-199 each bind NADP(+). An intrachain disulfide couples Cys-150 to Cys-158. Lys-161 (proton donor) is an active-site residue.

Belongs to the NAD(P)-dependent epimerase/dehydratase family. Dihydroflavonol-4-reductase subfamily. Post-translationally, the formation of a reversible disulfide bond reduces activity by perturbing the positioning of nearby catalytic residues. In terms of tissue distribution, expressed in flowers, leaves and stems.

The protein resides in the cytoplasm. It carries out the reaction (E)-coniferaldehyde + NADP(+) + CoA = (E)-feruloyl-CoA + NADPH + H(+). It catalyses the reaction (E)-4-coumaraldehyde + NADP(+) + CoA = (E)-4-coumaroyl-CoA + NADPH + H(+). The catalysed reaction is (E)-sinapaldehyde + NADP(+) + CoA = (E)-sinapoyl-CoA + NADPH + H(+). The enzyme catalyses (E)-cinnamaldehyde + NADP(+) + CoA = (E)-cinnamoyl-CoA + NADPH + H(+). It participates in aromatic compound metabolism; phenylpropanoid biosynthesis. Inhibited by sodium iodide-mediated oxidation. Functionally, involved in the latter stages of lignin biosynthesis. Catalyzes one of the last steps of monolignol biosynthesis, the conversion of cinnamoyl-CoAs into their corresponding cinnamaldehydes. Mediates the conversion of feruloyl CoA to coniferylaldehyde. Also active toward p-coumaroyl-CoA and sinapoyl-CoA. Involved in the production of floral volatile phenylpropanoids in flowers of fragrant cultivars (e.g. cv. Mitchell and cv. V26) from cinnamic acid, a common precursor with the anthocyanin biosynthesis pathway involved in flower pigmentation. This Petunia hybrida (Petunia) protein is Cinnamoyl-CoA reductase 1.